Consider the following 477-residue polypeptide: Angiotensinogen (477 aa).

The signal sequence occupies residues 1 to 24 (MTPTGAGLKATIFCILTWVSLTAG). A disulfide bond links Cys-42 and Cys-161. Asn-295 and Asn-319 each carry an N-linked (GlcNAc...) asparagine glycan.

This sequence belongs to the serpin family. In response to low blood pressure, the enzyme renin/REN cleaves angiotensinogen to produce angiotensin-1. Angiotensin-1 is a substrate of ACE (angiotensin converting enzyme) that removes a dipeptide to yield the physiologically active peptide angiotensin-2. Angiotensin-1 and angiotensin-2 can be further processed to generate angiotensin-3, angiotensin-4. Angiotensin 1-9 is cleaved from angiotensin-1 by ACE2 and can be further processed by ACE to produce angiotensin 1-7, angiotensin 1-5 and angiotensin 1-4. Angiotensin 1-7 has also been proposed to be cleaved from angiotensin-2 by ACE2 or from angiotensin-1 by MME (neprilysin). Post-translationally, the disulfide bond is labile. Angiotensinogen is present in the circulation in a near 40:60 ratio with the oxidized disulfide-bonded form, which preferentially interacts with receptor-bound renin.

It localises to the secreted. Essential component of the renin-angiotensin system (RAS), a potent regulator of blood pressure, body fluid and electrolyte homeostasis. Functionally, acts directly on vascular smooth muscle as a potent vasoconstrictor, affects cardiac contractility and heart rate through its action on the sympathetic nervous system, and alters renal sodium and water absorption through its ability to stimulate the zona glomerulosa cells of the adrenal cortex to synthesize and secrete aldosterone. Acts by binding to angiotensin receptors AGTR1 and AGTR2. Also binds the DEAR/FBXW7-AS1 receptor. Its function is as follows. Stimulates aldosterone release. In terms of biological role, is a ligand for the G-protein coupled receptor MAS1. Has vasodilator and antidiuretic effects. Has an antithrombotic effect that involves MAS1-mediated release of nitric oxide from platelets. In Rattus norvegicus (Rat), this protein is Angiotensinogen (Agt).